The sequence spans 383 residues: Glutamyl-tRNA reductase (383 aa).

Residues 38 to 41 (TCNR), S82, 87 to 89 (EDQ), and Q93 each bind substrate. C39 functions as the Nucleophile in the catalytic mechanism. Position 161–166 (161–166 (GAGEIA)) interacts with NADP(+).

The protein belongs to the glutamyl-tRNA reductase family. In terms of assembly, homodimer.

It catalyses the reaction (S)-4-amino-5-oxopentanoate + tRNA(Glu) + NADP(+) = L-glutamyl-tRNA(Glu) + NADPH + H(+). The protein operates within porphyrin-containing compound metabolism; protoporphyrin-IX biosynthesis; 5-aminolevulinate from L-glutamyl-tRNA(Glu): step 1/2. In terms of biological role, catalyzes the NADPH-dependent reduction of glutamyl-tRNA(Glu) to glutamate 1-semialdehyde (GSA). This chain is Glutamyl-tRNA reductase, found in Methanococcus aeolicus (strain ATCC BAA-1280 / DSM 17508 / OCM 812 / Nankai-3).